Consider the following 123-residue polypeptide: Fluoride-specific ion channel FluC (123 aa).

The next 4 membrane-spanning stretches (helical) occupy residues 6–26 (VALVLIGGGTGAVARYYLSGV), 38–58 (LLVNSLASFLLGYLYGLIFWG), 68–88 (FLGTGFCGGLSTFSTFSYETF), and 100–120 (LLNIFANVLATIFLVFLGFVL). Glycine 75 and serine 78 together coordinate Na(+).

The protein belongs to the fluoride channel Fluc/FEX (TC 1.A.43) family.

The protein localises to the cell membrane. It carries out the reaction fluoride(in) = fluoride(out). With respect to regulation, na(+) is not transported, but it plays an essential structural role and its presence is essential for fluoride channel function. Fluoride-specific ion channel. Important for reducing fluoride concentration in the cell, thus reducing its toxicity. The protein is Fluoride-specific ion channel FluC of Pyrococcus furiosus (strain ATCC 43587 / DSM 3638 / JCM 8422 / Vc1).